The following is a 169-amino-acid chain: Orotate phosphoribosyltransferase (169 aa).

5-phospho-alpha-D-ribose 1-diphosphate is bound by residues Arg-86, Lys-90, His-92, and 111–119; that span reads EDVTTSGGS. Orotate contacts are provided by Thr-115 and Arg-143.

The protein belongs to the purine/pyrimidine phosphoribosyltransferase family. PyrE subfamily. Homodimer. Requires Mg(2+) as cofactor.

It catalyses the reaction orotidine 5'-phosphate + diphosphate = orotate + 5-phospho-alpha-D-ribose 1-diphosphate. Its pathway is pyrimidine metabolism; UMP biosynthesis via de novo pathway; UMP from orotate: step 1/2. In terms of biological role, catalyzes the transfer of a ribosyl phosphate group from 5-phosphoribose 1-diphosphate to orotate, leading to the formation of orotidine monophosphate (OMP). This chain is Orotate phosphoribosyltransferase, found in Methanocorpusculum labreanum (strain ATCC 43576 / DSM 4855 / Z).